The primary structure comprises 356 residues: MSLFASLTDAAYALARPLVHATDGEAAHNLTLAALQPLPRARHALTSPMLATELAGLRFPNPVGLAPGFDKDARVAHAMPHFGFGFVEVGTLTPLPQEGNPRPRLFRLVEDRAIINRMGFNNGGQVAAAERIACLRRHGLPVPLGINIGANKDSADRIADYAKGTAAMAPLADYLTVNISSPNTPGLRALQDRGALEALLDGVAAAQPAGAAKPVFLKVAPDLEPADIDDIVAVALDRGLAAVIVSNTTVARPPLASRHAVEAGGLSGAPLAQLALQCVQDFRAASGGRLPLIAAGGIASAEQAWERIRAGASLVQVYSAMVFEGPGLASRIARGLETLAARDGFARVSDAVGAGA.

FMN-binding positions include 67 to 71 (PGFDK) and threonine 91. Lysine 71 contributes to the substrate binding site. 116–120 (NRMGF) serves as a coordination point for substrate. Residues asparagine 147 and asparagine 178 each coordinate FMN. Residue asparagine 178 participates in substrate binding. The active-site Nucleophile is the serine 181. Asparagine 183 contacts substrate. Residues lysine 218 and serine 246 each coordinate FMN. A substrate-binding site is contributed by 247–248 (NT). FMN-binding positions include glycine 268, glycine 297, and 318–319 (YS).

Belongs to the dihydroorotate dehydrogenase family. Type 2 subfamily. In terms of assembly, monomer. Requires FMN as cofactor.

It is found in the cell membrane. It catalyses the reaction (S)-dihydroorotate + a quinone = orotate + a quinol. It functions in the pathway pyrimidine metabolism; UMP biosynthesis via de novo pathway; orotate from (S)-dihydroorotate (quinone route): step 1/1. Catalyzes the conversion of dihydroorotate to orotate with quinone as electron acceptor. The chain is Dihydroorotate dehydrogenase (quinone) from Sphingopyxis alaskensis (strain DSM 13593 / LMG 18877 / RB2256) (Sphingomonas alaskensis).